The sequence spans 428 residues: Glutamate-1-semialdehyde 2,1-aminomutase 1 (428 aa).

Residue K267 is modified to N6-(pyridoxal phosphate)lysine.

Belongs to the class-III pyridoxal-phosphate-dependent aminotransferase family. HemL subfamily. As to quaternary structure, homodimer. Pyridoxal 5'-phosphate is required as a cofactor.

The protein resides in the cytoplasm. The enzyme catalyses (S)-4-amino-5-oxopentanoate = 5-aminolevulinate. The protein operates within porphyrin-containing compound metabolism; protoporphyrin-IX biosynthesis; 5-aminolevulinate from L-glutamyl-tRNA(Glu): step 2/2. The chain is Glutamate-1-semialdehyde 2,1-aminomutase 1 (hemL1) from Staphylococcus aureus (strain NCTC 8325 / PS 47).